The primary structure comprises 302 residues: tRNA dimethylallyltransferase (302 aa).

Position 7 to 14 (7 to 14) interacts with ATP; that stretch reads GPTASGKS. A substrate-binding site is contributed by 9 to 14; it reads TASGKS. 2 interaction with substrate tRNA regions span residues 32–35 and 156–160; these read DSMQ and QRILR.

This sequence belongs to the IPP transferase family. In terms of assembly, monomer. Mg(2+) serves as cofactor.

The catalysed reaction is adenosine(37) in tRNA + dimethylallyl diphosphate = N(6)-dimethylallyladenosine(37) in tRNA + diphosphate. Catalyzes the transfer of a dimethylallyl group onto the adenine at position 37 in tRNAs that read codons beginning with uridine, leading to the formation of N6-(dimethylallyl)adenosine (i(6)A). The protein is tRNA dimethylallyltransferase of Beijerinckia indica subsp. indica (strain ATCC 9039 / DSM 1715 / NCIMB 8712).